The chain runs to 186 residues: ATP synthase subunit delta (186 aa).

It belongs to the ATPase delta chain family. F-type ATPases have 2 components, F(1) - the catalytic core - and F(0) - the membrane proton channel. F(1) has five subunits: alpha(3), beta(3), gamma(1), delta(1), epsilon(1). F(0) has three main subunits: a(1), b(2) and c(10-14). The alpha and beta chains form an alternating ring which encloses part of the gamma chain. F(1) is attached to F(0) by a central stalk formed by the gamma and epsilon chains, while a peripheral stalk is formed by the delta and b chains.

The protein resides in the cell inner membrane. Its function is as follows. F(1)F(0) ATP synthase produces ATP from ADP in the presence of a proton or sodium gradient. F-type ATPases consist of two structural domains, F(1) containing the extramembraneous catalytic core and F(0) containing the membrane proton channel, linked together by a central stalk and a peripheral stalk. During catalysis, ATP synthesis in the catalytic domain of F(1) is coupled via a rotary mechanism of the central stalk subunits to proton translocation. Functionally, this protein is part of the stalk that links CF(0) to CF(1). It either transmits conformational changes from CF(0) to CF(1) or is implicated in proton conduction. The sequence is that of ATP synthase subunit delta from Brucella canis (strain ATCC 23365 / NCTC 10854 / RM-666).